The primary structure comprises 90 residues: Small ribosomal subunit protein bS18A (90 aa).

It belongs to the bacterial ribosomal protein bS18 family. As to quaternary structure, part of the 30S ribosomal subunit. Forms a tight heterodimer with protein bS6.

Binds as a heterodimer with protein bS6 to the central domain of the 16S rRNA, where it helps stabilize the platform of the 30S subunit. This chain is Small ribosomal subunit protein bS18A, found in Roseiflexus castenholzii (strain DSM 13941 / HLO8).